The primary structure comprises 44 residues: Thymosin beta-4 (44 aa).

Positions 1–44 (MSDKPDMGEIQKFNKSKLKKTETQEKNPLPSKETIEQEKQAGES) are disordered. Serine 2 carries the post-translational modification N-acetylserine. Serine 2 bears the Phosphoserine mark. Lysine 4 is modified (N6-acetyllysine). Position 12 is an N6-acetyllysine; alternate (lysine 12). Residue lysine 12 forms a Glycyl lysine isopeptide (Lys-Gly) (interchain with G-Cter in SUMO2); alternate linkage. At threonine 23 the chain carries Phosphothreonine. Lysine 26 bears the N6-acetyllysine mark. Phosphoserine is present on serine 31. Lysine 32 carries the post-translational modification N6-acetyllysine. Residues 33–44 (ETIEQEKQAGES) show a composition bias toward basic and acidic residues. Threonine 34 is subject to Phosphothreonine. Residue lysine 39 is modified to N6-acetyllysine.

The protein belongs to the thymosin beta family. In terms of assembly, identified in a complex composed of ACTA1, COBL, GSN AND TMSB4X. Interacts with SERPINB1. In terms of processing, acSDKP is inactivated by ACE, which removes the dipeptide Lys-Pro from its C-terminus.

The protein resides in the cytoplasm. It localises to the cytoskeleton. In terms of biological role, plays an important role in the organization of the cytoskeleton. Binds to and sequesters actin monomers (G actin) and therefore inhibits actin polymerization. Functionally, potent inhibitor of bone marrow derived stem cell differentiation. Acts by inhibits the entry of hematopoietic pluripotent stem cells into the S-phase. This Notamacropus eugenii (Tammar wallaby) protein is Thymosin beta-4 (TMSB4).